A 242-amino-acid polypeptide reads, in one-letter code: Floral homeotic protein AGAMOUS (242 aa).

In terms of domain architecture, MADS-box spans 19–73; sequence RGKIEIKRIENTTNRQVTFCKRRNGLLKKAYELSVLCDAEVALIVFSTRGRLYEY. The region spanning 103–193 is the K-box domain; that stretch reads AQFYQQEASK…RAKIAENERA (91 aa).

As to expression, flower. Preferentially expressed in stamen and carpel and weakly in petal. Undetected in leaves and roots.

The protein resides in the nucleus. Its function is as follows. Probable transcription factor involved in regulating genes that determines stamen and carpel development in wild-type flowers. The sequence is that of Floral homeotic protein AGAMOUS (AG2) from Panax ginseng (Korean ginseng).